The primary structure comprises 749 residues: Probable galactinol--sucrose galactosyltransferase 6 (749 aa).

This sequence belongs to the glycosyl hydrolases 36 family.

The enzyme catalyses alpha-D-galactosyl-(1-&gt;3)-1D-myo-inositol + sucrose = raffinose + myo-inositol. In terms of biological role, transglycosidase operating by a ping-pong reaction mechanism. Involved in the synthesis of raffinose, a major soluble carbohydrate in seeds, roots and tubers. The sequence is that of Probable galactinol--sucrose galactosyltransferase 6 (RFS6) from Arabidopsis thaliana (Mouse-ear cress).